The primary structure comprises 221 residues: Small ribosomal subunit protein uS3 (221 aa).

One can recognise a KH type-2 domain in the interval 39-107; the sequence is IRNYIKEKLY…TVILNIIEVK (69 aa).

Belongs to the universal ribosomal protein uS3 family. As to quaternary structure, part of the 30S ribosomal subunit. Forms a tight complex with proteins S10 and S14.

Binds the lower part of the 30S subunit head. Binds mRNA in the 70S ribosome, positioning it for translation. The polypeptide is Small ribosomal subunit protein uS3 (Caldanaerobacter subterraneus subsp. tengcongensis (strain DSM 15242 / JCM 11007 / NBRC 100824 / MB4) (Thermoanaerobacter tengcongensis)).